Here is a 645-residue protein sequence, read N- to C-terminus: Threonine--tRNA ligase (645 aa).

One can recognise a TGS domain in the interval 1 to 63 (MEQINIQFPD…ETDGSIGIVT (63 aa)). The interval 242 to 540 (DHRKIGKELE…LTEETKGAFP (299 aa)) is catalytic. Zn(2+)-binding residues include cysteine 336, histidine 387, and histidine 517.

It belongs to the class-II aminoacyl-tRNA synthetase family. Homodimer. Zn(2+) serves as cofactor.

It is found in the cytoplasm. It catalyses the reaction tRNA(Thr) + L-threonine + ATP = L-threonyl-tRNA(Thr) + AMP + diphosphate + H(+). Functionally, catalyzes the attachment of threonine to tRNA(Thr) in a two-step reaction: L-threonine is first activated by ATP to form Thr-AMP and then transferred to the acceptor end of tRNA(Thr). Also edits incorrectly charged L-seryl-tRNA(Thr). This chain is Threonine--tRNA ligase, found in Staphylococcus aureus (strain Mu3 / ATCC 700698).